We begin with the raw amino-acid sequence, 424 residues long: Ribulose bisphosphate carboxylase (424 aa).

Lys-159 (proton acceptor) is an active-site residue. Residue Lys-161 coordinates substrate. Residues Lys-185, Asp-187, and Glu-188 each contribute to the Mg(2+) site. An N6-carboxylysine modification is found at Lys-185. His-277 (proton acceptor) is an active-site residue. Residues Arg-278, His-310, Ser-347 to Gly-349, and Gln-369 to Gly-372 contribute to the substrate site.

It belongs to the RuBisCO large chain family. Type III subfamily. Homodimer or homodecamer. In contrast to form I RuBisCO, the form III RuBisCO is composed solely of large subunits. Mg(2+) serves as cofactor.

The enzyme catalyses 2 (2R)-3-phosphoglycerate + 2 H(+) = D-ribulose 1,5-bisphosphate + CO2 + H2O. It carries out the reaction D-ribulose 1,5-bisphosphate + O2 = 2-phosphoglycolate + (2R)-3-phosphoglycerate + 2 H(+). Catalyzes the addition of molecular CO(2) and H(2)O to ribulose 1,5-bisphosphate (RuBP), generating two molecules of 3-phosphoglycerate (3-PGA). Functions in an archaeal AMP degradation pathway, together with AMP phosphorylase and R15P isomerase. The sequence is that of Ribulose bisphosphate carboxylase from Pyrococcus abyssi (strain GE5 / Orsay).